The chain runs to 82 residues: ATP synthase subunit c (82 aa).

The next 2 membrane-spanning stretches (helical) occupy residues 3 to 23 (PLVA…ASLG) and 57 to 77 (LAFM…LLFA).

The protein belongs to the ATPase C chain family. In terms of assembly, F-type ATPases have 2 components, F(1) - the catalytic core - and F(0) - the membrane proton channel. F(1) has five subunits: alpha(3), beta(3), gamma(1), delta(1), epsilon(1). F(0) has four main subunits: a(1), b(1), b'(1) and c(10-14). The alpha and beta chains form an alternating ring which encloses part of the gamma chain. F(1) is attached to F(0) by a central stalk formed by the gamma and epsilon chains, while a peripheral stalk is formed by the delta, b and b' chains.

The protein resides in the cellular thylakoid membrane. In terms of biological role, f(1)F(0) ATP synthase produces ATP from ADP in the presence of a proton or sodium gradient. F-type ATPases consist of two structural domains, F(1) containing the extramembraneous catalytic core and F(0) containing the membrane proton channel, linked together by a central stalk and a peripheral stalk. During catalysis, ATP synthesis in the catalytic domain of F(1) is coupled via a rotary mechanism of the central stalk subunits to proton translocation. Functionally, key component of the F(0) channel; it plays a direct role in translocation across the membrane. A homomeric c-ring of between 10-14 subunits forms the central stalk rotor element with the F(1) delta and epsilon subunits. This Synechococcus sp. (strain PCC 6716) protein is ATP synthase subunit c.